We begin with the raw amino-acid sequence, 284 residues long: MIFLSQAQIDALLLEDIQGGDLTTRALNIGHQHGYIEFFLRQGGCVSGISVACKMLTTLGLTIDDAVSDGSQANAGQRLIRAQGNAAALHQGWKAVQNVLEWSCGVSDYLAQMLALLRERYPDGNIACTRKAIPGTRLLASQAILAAGGLIHRAGCAETILLFANHRHFLHDNQDWSGAINQLRRHAPEKKIVVEADTPKEAIAALRAQPDVLQLDKFSPQQATEIAQIAPSLAPHCTLALTGGINLTTLKNYLDCGIRLFITSAPYYAAPADIKVSLQPAASI.

The protein belongs to the NadC/ModD family.

The protein is Putative pyrophosphorylase ModD (modD) of Escherichia coli O6:H1 (strain CFT073 / ATCC 700928 / UPEC).